The chain runs to 130 residues: Small ribosomal subunit protein uS11 (130 aa).

Belongs to the universal ribosomal protein uS11 family. In terms of assembly, part of the 30S ribosomal subunit. Interacts with proteins S7 and S18. Binds to IF-3.

Its function is as follows. Located on the platform of the 30S subunit, it bridges several disparate RNA helices of the 16S rRNA. Forms part of the Shine-Dalgarno cleft in the 70S ribosome. The sequence is that of Small ribosomal subunit protein uS11 from Prochlorococcus marinus (strain MIT 9312).